The following is a 396-amino-acid chain: Probable protein phosphatase 2C 25 (396 aa).

Residues 32–98 form a disordered region; that stretch reads ESLSLTLSHR…SPPGGVLKRK (67 aa). The span at 44–61 shows a compositional bias: low complexity; that stretch reads QTSSPSSPSTTVSSPKSP. The region spanning 139–392 is the PPM-type phosphatase domain; the sequence is GYSVYCKRGR…DDISVMLIPL (254 aa). Residues Asp175, Gly176, Asp338, and Asp383 each contribute to the Mn(2+) site.

The protein belongs to the PP2C family. Interacts with MPK4 and MPK6. Requires Mg(2+) as cofactor. The cofactor is Mn(2+).

It localises to the cytoplasm. Its subcellular location is the nucleus. The enzyme catalyses O-phospho-L-seryl-[protein] + H2O = L-seryl-[protein] + phosphate. It catalyses the reaction O-phospho-L-threonyl-[protein] + H2O = L-threonyl-[protein] + phosphate. In terms of biological role, protein phosphatase that negatively regulates defense respones. Inactivates MPK4 and MPK6 MAP kinases involved in stress and defense signaling. This chain is Probable protein phosphatase 2C 25, found in Arabidopsis thaliana (Mouse-ear cress).